Here is a 354-residue protein sequence, read N- to C-terminus: Selenide, water dikinase (354 aa).

C23 is a catalytic residue. Residues K26 and 54–56 (TSD) each bind ATP. A Mg(2+)-binding site is contributed by D57. ATP-binding positions include D74, D97, and 145 to 147 (GHS). D97 lines the Mg(2+) pocket. D233 provides a ligand contact to Mg(2+).

It belongs to the selenophosphate synthase 1 family. Class I subfamily. In terms of assembly, homodimer. Mg(2+) is required as a cofactor.

The enzyme catalyses hydrogenselenide + ATP + H2O = selenophosphate + AMP + phosphate + 2 H(+). Synthesizes selenophosphate from selenide and ATP. The chain is Selenide, water dikinase from Burkholderia cenocepacia (strain ATCC BAA-245 / DSM 16553 / LMG 16656 / NCTC 13227 / J2315 / CF5610) (Burkholderia cepacia (strain J2315)).